The sequence spans 455 residues: 12S seed storage protein CRB (455 aa).

The N-terminal stretch at 1 to 24 is a signal peptide; it reads MGRVSSIISFSLTLLILFNGYTAQ. Intrachain disulfides connect C30–C63 and C106–C276. Cupin type-1 domains are found at residues 35-229 and 282-431; these read LNAL…ETAQ and ENLD…EEAK. T109 carries the phosphothreonine modification. Y299 is modified (phosphotyrosine). 2 positions are modified to phosphoserine: S301 and S367. A phosphothreonine mark is found at T395 and T420. Residue S436 is modified to Phosphoserine.

Belongs to the 11S seed storage protein (globulins) family. In terms of assembly, hexamer; each subunit is composed of an acidic and a basic chain derived from a single precursor and linked by a disulfide bond. In terms of processing, ubiquitinated. Proteolytically processed during seed maturation at a conserved Asn-Gly peptide bond by an asparaginyl endopeptidase to produce two mature polypeptides referred to as alpha and beta subunits that are joined together by a disulfide bond. Post-translationally, phosphorylated in seeds on some Tyr residues in response to abscisic acid (ABA). Accumulates in seeds 8 days after anthesis.

The protein localises to the protein storage vacuole. Functionally, seed storage protein. This Arabidopsis thaliana (Mouse-ear cress) protein is 12S seed storage protein CRB (CRB).